The primary structure comprises 77 residues: uncharacterized protein (77 aa).

The helical transmembrane segment at Val-13–Leu-33 threads the bilayer.

Its subcellular location is the membrane. This is an uncharacterized protein from Saccharomyces cerevisiae (strain ATCC 204508 / S288c) (Baker's yeast).